The following is a 130-amino-acid chain: Ribosome-binding factor A (130 aa).

Belongs to the RbfA family. As to quaternary structure, monomer. Binds 30S ribosomal subunits, but not 50S ribosomal subunits or 70S ribosomes.

It is found in the cytoplasm. Its function is as follows. One of several proteins that assist in the late maturation steps of the functional core of the 30S ribosomal subunit. Associates with free 30S ribosomal subunits (but not with 30S subunits that are part of 70S ribosomes or polysomes). Required for efficient processing of 16S rRNA. May interact with the 5'-terminal helix region of 16S rRNA. This Methylibium petroleiphilum (strain ATCC BAA-1232 / LMG 22953 / PM1) protein is Ribosome-binding factor A.